The sequence spans 220 residues: Ribonuclease HII (220 aa).

An RNase H type-2 domain is found at 1–210 (MKVAGVDEAG…ARKIEERFRK (210 aa)). Aspartate 7, glutamate 8, and aspartate 105 together coordinate a divalent metal cation.

The protein belongs to the RNase HII family. The cofactor is Mn(2+). It depends on Mg(2+) as a cofactor.

Its subcellular location is the cytoplasm. The enzyme catalyses Endonucleolytic cleavage to 5'-phosphomonoester.. Functionally, endonuclease that specifically degrades the RNA of RNA-DNA hybrids. The sequence is that of Ribonuclease HII (rnhB) from Pyrococcus horikoshii (strain ATCC 700860 / DSM 12428 / JCM 9974 / NBRC 100139 / OT-3).